We begin with the raw amino-acid sequence, 358 residues long: Isopentenyl-diphosphate delta-isomerase (358 aa).

12–13 (RK) serves as a coordination point for substrate. FMN contacts are provided by residues 69-71 (AMT), S99, and N128. Q158 contributes to the substrate binding site. Position 159 (E159) interacts with Mg(2+). FMN contacts are provided by residues K190, T220, 267–269 (GIR), and 288–289 (AG).

It belongs to the IPP isomerase type 2 family. In terms of assembly, homooctamer. Dimer of tetramers. FMN serves as cofactor. Requires NADPH as cofactor. It depends on Mg(2+) as a cofactor.

It localises to the cytoplasm. It carries out the reaction isopentenyl diphosphate = dimethylallyl diphosphate. Its function is as follows. Involved in the biosynthesis of isoprenoids. Catalyzes the 1,3-allylic rearrangement of the homoallylic substrate isopentenyl (IPP) to its allylic isomer, dimethylallyl diphosphate (DMAPP). This chain is Isopentenyl-diphosphate delta-isomerase, found in Listeria welshimeri serovar 6b (strain ATCC 35897 / DSM 20650 / CCUG 15529 / CIP 8149 / NCTC 11857 / SLCC 5334 / V8).